A 634-amino-acid polypeptide reads, in one-letter code: Probable potassium transport system protein Kup (634 aa).

Helical transmembrane passes span 19–39, 62–82, 113–133, 150–170, 177–197, 225–245, 259–279, 291–311, 349–369, 379–399, 406–426, and 431–451; these read AIGL…TSPL, VLSL…VIFV, FVVV…MITP, GLEH…FLIQ, IGIL…ALGV, IGVA…ALYA, WFLL…ATIL, LLAP…ATVI, IYIG…VLGF, YGVA…VVIW, LWLG…FFAA, and VIQG…LMST.

Belongs to the HAK/KUP transporter (TC 2.A.72) family.

The protein localises to the cell inner membrane. The catalysed reaction is K(+)(in) + H(+)(in) = K(+)(out) + H(+)(out). Functionally, transport of potassium into the cell. Likely operates as a K(+):H(+) symporter. This chain is Probable potassium transport system protein Kup, found in Pseudomonas aeruginosa (strain UCBPP-PA14).